Consider the following 76-residue polypeptide: Conotoxin PnMKLT1-1111 (76 aa).

The signal sequence occupies residues 1-22 (MKLTCMMIVAVLFLTAWTVVTA). Residues 23-50 (VPHSNKRLANLYLKARHEMKNPEASNVD) constitute a propeptide that is removed on maturation. 3 cysteine pairs are disulfide-bonded: C53–C67, C60–C71, and C66–C75.

Belongs to the conotoxin O1 superfamily. As to expression, expressed by the venom duct.

It is found in the secreted. The polypeptide is Conotoxin PnMKLT1-1111 (Conus pennaceus (Feathered cone)).